A 204-amino-acid polypeptide reads, in one-letter code: Large ribosomal subunit protein eL15 (204 aa).

Positions 172 to 182 (RGLRGRGHLHN) are enriched in basic residues. The disordered stretch occupies residues 172–204 (RGLRGRGHLHNKAPPSRRANWKRNQTLSLPRYR). A compositionally biased stretch (polar residues) spans 193–204 (KRNQTLSLPRYR).

It belongs to the eukaryotic ribosomal protein eL15 family.

The chain is Large ribosomal subunit protein eL15 (RPL15) from Petunia hybrida (Petunia).